Consider the following 115-residue polypeptide: Large ribosomal subunit protein uL22 (115 aa).

This sequence belongs to the universal ribosomal protein uL22 family. As to quaternary structure, part of the 50S ribosomal subunit.

Its function is as follows. This protein binds specifically to 23S rRNA; its binding is stimulated by other ribosomal proteins, e.g. L4, L17, and L20. It is important during the early stages of 50S assembly. It makes multiple contacts with different domains of the 23S rRNA in the assembled 50S subunit and ribosome. Functionally, the globular domain of the protein is located near the polypeptide exit tunnel on the outside of the subunit, while an extended beta-hairpin is found that lines the wall of the exit tunnel in the center of the 70S ribosome. The polypeptide is Large ribosomal subunit protein uL22 (Limosilactobacillus reuteri subsp. reuteri (strain JCM 1112) (Lactobacillus reuteri)).